The primary structure comprises 604 residues: MLARALLLCVALALGHAANPCCSNPCQNRGVCMSVGFDQYQCDCTRTGFYGENCSTPEFLTRIKLFLKPTPNTVHYILTHFKGVWNIVNSFPFLRNAVMKYVLVSRSHLIESPPTYNAQYGYKSWESFSNLSYYTRALPPVADGCPTPMGVKGKKELPDSKEIVEKFLLRRKFIPDPQGTNMMFAFFAQHFTHQFFKTDPKRGPAFTKGLGHGVDLSHIYGETLDRQHKLRLFKDGKMKYQIINGEVYPPTVKDTQVEMIYPPHIPEHLRFAVGQEVFGLVPGLMMYATIWLREHNRVCDVLKQEHPEWDDERLFQTSRLILIGETIKIVIEDYVQHLSGYHFKLKFDPELLFNQQFQYQNRIAAEFNTLYHWHPLLPDTFQIDDQEYNFQQFLYNNSILLEHGLTQFVESFSRQIAGRVAGGRNVPAAAQKIAKASIDQSREMKYQSLNEYRKRFRLTPYKSFEELTGEKEMAAELEALYGDIDAMELYPALLVEKPRPDAIFGETMVELGAPFSLKGLLGNPICSPDYWKPSTFGGEVGFKIINTASIQSLICNNVKGCPFTAFSVQDPQLSKAVTINASASHSGLDDVNPTVLLKERSTEL.

Residues methionine 1–alanine 17 form the signal peptide. Residues alanine 18–serine 55 form the EGF-like domain. Disulfide bonds link cysteine 21/cysteine 32, cysteine 22/cysteine 145, cysteine 26/cysteine 42, and cysteine 44/cysteine 54. N-linked (GlcNAc...) asparagine glycosylation occurs at asparagine 53. A substrate-binding site is contributed by arginine 106. Residue asparagine 130 is glycosylated (N-linked (GlcNAc...) asparagine). Histidine 193 functions as the Proton acceptor in the catalytic mechanism. Tyrosine 341 lines the substrate pocket. Catalysis depends on tyrosine 371, which acts as the For cyclooxygenase activity. Histidine 374 is a heme b binding site. Asparagine 396 carries an N-linked (GlcNAc...) asparagine glycan. Cysteine 526 carries the post-translational modification S-nitrosocysteine. A disulfide bridge links cysteine 555 with cysteine 561. A glycan (N-linked (GlcNAc...) asparagine) is linked at asparagine 580.

The protein belongs to the prostaglandin G/H synthase family. In terms of assembly, homodimer. The cofactor is heme b. In terms of processing, S-nitrosylation by NOS2 (iNOS) activates enzyme activity. S-nitrosylation may take place on different Cys residues in addition to Cys-526.

Its subcellular location is the microsome membrane. It localises to the endoplasmic reticulum membrane. The protein resides in the nucleus inner membrane. It is found in the nucleus outer membrane. It catalyses the reaction (5Z,8Z,11Z,14Z)-eicosatetraenoate + AH2 + 2 O2 = prostaglandin H2 + A + H2O. The enzyme catalyses (5Z,8Z,11Z,14Z)-eicosatetraenoate + 2 O2 = prostaglandin G2. It carries out the reaction prostaglandin G2 + AH2 = prostaglandin H2 + A + H2O. The catalysed reaction is (5Z,8Z,11Z,14Z,17Z)-eicosapentaenoate + 2 O2 = prostaglandin G3. It catalyses the reaction prostaglandin G3 + AH2 = prostaglandin H3 + A + H2O. The enzyme catalyses (8Z,11Z,14Z)-eicosatrienoate + 2 O2 = prostaglandin G1. It carries out the reaction prostaglandin G1 + AH2 = prostaglandin H1 + A + H2O. The catalysed reaction is 2-(5Z,8Z,11Z,14Z)-eicosatetraenoyl-sn-glycero-3-phosphoethanolamine + 2 O2 = 2-(prostaglandin G2)-sn-glycero-3-phosphoethanolamine. It catalyses the reaction 2-(prostaglandin G2)-sn-glycero-3-phosphoethanolamine + AH2 = 2-(prostaglandin H2)-sn-glycero-3-phosphoethanolamine + A + H2O. The enzyme catalyses 2-(5Z,8Z,11Z,14Z)-eicosatetraenoyl-sn-glycero-3-phosphocholine + 2 O2 = 2-(prostaglandin G2)-sn-glycero-3-phosphocholine. It carries out the reaction 2-(prostaglandin G2)-sn-glycero-3-phosphocholine + AH2 = 2-(prostaglandin H2)-sn-glycero-3-phosphocholine + A + H2O. The catalysed reaction is (15S)-hydroperoxy-(5Z,8Z,11Z,13E)-eicosatetraenoate + AH2 = (15S)-hydroxy-(5Z,8Z,11Z,13E)-eicosatetraenoate + A + H2O. It catalyses the reaction 2-(5Z,8Z,11Z,14Z)-eicosatetraenoyl-sn-glycero-3-phosphocholine + AH2 + O2 = 2-[(15S)-hydroxy-(5Z,8Z,11Z,13E)-eicosatetraenoyl]-sn-glycero-3-phosphocholine + A + H2O. The enzyme catalyses 2-(5Z,8Z,11Z,14Z)-eicosatetraenoyl-sn-glycero-3-phosphocholine + AH2 + O2 = 2-[(15R)-hydroxy-(5Z,8Z,11Z,13E)-eicosatetraenoyl]-sn-glycero-3-phosphocholine + A + H2O. It carries out the reaction 2-(5Z,8Z,11Z,14Z)-eicosatetraenoyl-sn-glycero-3-phosphocholine + AH2 + O2 = 2-[(11R)-hydroxy-(5Z,8Z,12E,14Z)-eicosatetraenoyl]-sn-glycero-3-phosphocholine + A + H2O. The catalysed reaction is (9Z,12Z)-octadecadienoate + AH2 + O2 = 9-hydroxy-(10E,12Z)-octadecadienoate + A + H2O. It catalyses the reaction (9Z,12Z)-octadecadienoate + AH2 + O2 = 13-hydroxy-(9Z,11E)-octadecadienoate + A + H2O. The enzyme catalyses (5Z,8Z,11Z,14Z)-eicosatetraenoate + AH2 + O2 = (15R)-hydroxy-(5Z,8Z,11Z,13E)-eicosatetraenoate + A + H2O. It carries out the reaction (5Z,8Z,11Z,14Z)-eicosatetraenoate + AH2 + O2 = (11R)-hydroxy-(5Z,8Z,12E,14Z)-eicosatetraenoate + A + H2O. The catalysed reaction is (5Z,8Z,11Z,14Z,17Z)-eicosapentaenoate + AH2 + O2 = (11R)-hydroxy-(5Z,8Z,12E,14Z,17Z)-eicosapentaenoate + A + H2O. It catalyses the reaction (5Z,8Z,11Z,14Z,17Z)-eicosapentaenoate + AH2 + O2 = (18S)-hydroxy-(5Z,8Z,11Z,14Z,16E)-eicosapentaenoate + A + H2O. The enzyme catalyses (5Z,8Z,11Z,14Z,17Z)-eicosapentaenoate + AH2 + O2 = (18R)-hydroxy-(5Z,8Z,11Z,14Z,16E)-eicosapentaenoate + A + H2O. It carries out the reaction (5Z,8Z,11Z,14Z,17Z)-eicosapentaenoate + AH2 + O2 = (15R)-hydroxy-(5Z,8Z,11Z,13E,17Z)-eicosapentaenoate + A + H2O. The catalysed reaction is (5Z,8Z,11Z,14Z,17Z)-eicosapentaenoate + AH2 + O2 = (15S)-hydroxy-(5Z,8Z,11Z,13E,17Z)-eicosapentaenoate + A + H2O. It catalyses the reaction (7Z,10Z,13Z,16Z,19Z)-docosapentaenoate + AH2 + O2 = 13R-hydroxy-(7Z,10Z,14E,16Z,19Z)-docosapentaenoate + A + H2O. The enzyme catalyses (4Z,7Z,10Z,13Z,16Z,19Z)-docosahexaenoate + AH2 + O2 = 13-hydroxy-(4Z,7Z,10Z,14E,16Z,19Z)-docosahexaenoate + A + H2O. It carries out the reaction (5S)-hydroxy-(6E,8Z,11Z,14Z)-eicosatetraenoate + AH2 + O2 = (5S,15R)-dihydroxy-(6E,8Z,11Z,13E)-eicosatetraenoate + A + H2O. The catalysed reaction is (4Z,7Z,10Z,13Z,16Z,19Z)-docosahexaenoate + AH2 + O2 = 17R-hydroxy-(4Z,7Z,10Z,13Z,15E,19Z)-docosahexaenoate + A + H2O. It catalyses the reaction (5S)-hydroxy-(6E,8Z,11Z,14Z)-eicosatetraenoate + AH2 + O2 = (5S,15S)-dihydroxy-(6E,8Z,11Z,13E)-eicosatetraenoate + A + H2O. The enzyme catalyses (5S)-hydroxy-(6E,8Z,11Z,14Z)-eicosatetraenoate + AH2 + O2 = (5S,11R)-dihydroxy-(6E,8Z,12E,14Z)-eicosatetraenoate + A + H2O. It carries out the reaction 2-(5Z,8Z,11Z,14Z-eicosatetraenoyl)-glycerol + 2 O2 = 2-glyceryl-prostaglandin G2. The catalysed reaction is 2-glyceryl-prostaglandin G2 + AH2 = 2-glyceryl-prostaglandin H2 + A + H2O. It catalyses the reaction (5Z,8Z,11Z,14Z)-eicosatetraenoate + O2 = (15R)-hydroperoxy-(5Z,8Z,11Z,13E)-eicosatetraenoate. The enzyme catalyses (5Z,8Z,11Z,14Z)-eicosatetraenoate + O2 = 11R-hydroperoxy-(5Z,8Z,12E,14Z)-eicosatetraenoate. It carries out the reaction (9Z,12Z)-octadecadienoate + AH2 + O2 = (9R)-hydroxy-(10E,12Z)-octadecadienoate + A + H2O. The catalysed reaction is (9Z,12Z)-octadecadienoate + AH2 + O2 = (9S)-hydroxy-(10E,12Z)-octadecadienoate + A + H2O. It catalyses the reaction (9Z,12Z)-octadecadienoate + AH2 + O2 = (13S)-hydroxy-(9Z,11E)-octadecadienoate + A + H2O. The enzyme catalyses (9Z,12Z)-octadecadienoate + AH2 + O2 = (13R)-hydroxy-(9Z,11E)-octadecadienoate + A + H2O. It participates in lipid metabolism; prostaglandin biosynthesis. Dual cyclooxygenase and peroxidase in the biosynthesis pathway of prostanoids, a class of C20 oxylipins mainly derived from arachidonate ((5Z,8Z,11Z,14Z)-eicosatetraenoate, AA, C20:4(n-6)), with a particular role in the inflammatory response. The cyclooxygenase activity oxygenates AA to the hydroperoxy endoperoxide prostaglandin G2 (PGG2), and the peroxidase activity reduces PGG2 to the hydroxy endoperoxide prostaglandin H2 (PGH2), the precursor of all 2-series prostaglandins and thromboxanes. This complex transformation is initiated by abstraction of hydrogen at carbon 13 (with S-stereochemistry), followed by insertion of molecular O2 to form the endoperoxide bridge between carbon 9 and 11 that defines prostaglandins. The insertion of a second molecule of O2 (bis-oxygenase activity) yields a hydroperoxy group in PGG2 that is then reduced to PGH2 by two electrons. Similarly catalyzes successive cyclooxygenation and peroxidation of dihomo-gamma-linoleate (DGLA, C20:3(n-6)) and eicosapentaenoate (EPA, C20:5(n-3)) to corresponding PGH1 and PGH3, the precursors of 1- and 3-series prostaglandins. In an alternative pathway of prostanoid biosynthesis, converts 2-arachidonoyl lysophopholipids to prostanoid lysophopholipids, which are then hydrolyzed by intracellular phospholipases to release free prostanoids. Metabolizes 2-arachidonoyl glycerol yielding the glyceryl ester of PGH2, a process that can contribute to pain response. Generates lipid mediators from n-3 and n-6 polyunsaturated fatty acids (PUFAs) via a lipoxygenase-type mechanism. Oxygenates PUFAs to hydroperoxy compounds and then reduces them to corresponding alcohols. Plays a role in the generation of resolution phase interaction products (resolvins) during both sterile and infectious inflammation. Metabolizes docosahexaenoate (DHA, C22:6(n-3)) to 17R-HDHA, a precursor of the D-series resolvins (RvDs). As a component of the biosynthetic pathway of E-series resolvins (RvEs), converts eicosapentaenoate (EPA, C20:5(n-3)) primarily to 18S-HEPE that is further metabolized by ALOX5 and LTA4H to generate 18S-RvE1 and 18S-RvE2. In vascular endothelial cells, converts docosapentaenoate (DPA, C22:5(n-3)) to 13R-HDPA, a precursor for 13-series resolvins (RvTs) shown to activate macrophage phagocytosis during bacterial infection. In activated leukocytes, contributes to oxygenation of hydroxyeicosatetraenoates (HETE) to diHETES (5,15-diHETE and 5,11-diHETE). Can also use linoleate (LA, (9Z,12Z)-octadecadienoate, C18:2(n-6)) as substrate and produce hydroxyoctadecadienoates (HODEs) in a regio- and stereospecific manner, being (9R)-HODE ((9R)-hydroxy-(10E,12Z)-octadecadienoate) and (13S)-HODE ((13S)-hydroxy-(9Z,11E)-octadecadienoate) its major products. During neuroinflammation, plays a role in neuronal secretion of specialized preresolving mediators (SPMs) 15R-lipoxin A4 that regulates phagocytic microglia. The sequence is that of Prostaglandin G/H synthase 2 (PTGS2) from Equus caballus (Horse).